We begin with the raw amino-acid sequence, 308 residues long: Cytochrome c biogenesis protein CcsA (308 aa).

Transmembrane regions (helical) follow at residues 2–22 (IVSTLEHILTHISFSIVSILI), 44–64 (GMLVTFFCITGLLATHWIYLG), 71–91 (LSESLIFLSWSFALIHSIAYF), 143–163 (MILGYAALLCGSLLSVALMVI), 212–232 (VIGLGFIFLTIGILSGAVWAN), 239–259 (WSWDPKETWAFITWIVFAIYL), and 273–293 (AIVASIGFLIIWICYFGVNLV).

It belongs to the CcmF/CycK/Ccl1/NrfE/CcsA family. As to quaternary structure, may interact with Ccs1.

It is found in the plastid membrane. Functionally, required during biogenesis of c-type cytochromes (cytochrome c6 and cytochrome f) at the step of heme attachment. The polypeptide is Cytochrome c biogenesis protein CcsA (Cuscuta exaltata (Tall dodder)).